The primary structure comprises 282 residues: Protein OS-9 homolog (282 aa).

The N-terminal stretch at 1 to 23 is a signal peptide; the sequence is MRITQILLCLVIVALSSSSHVWS. Residue Asn94 is glycosylated (N-linked (GlcNAc...) asparagine). Positions 120-239 constitute an MRH domain; sequence EKCLFRQEGW…TVQCPTLCKH (120 aa). The cysteines at positions 122 and 135 are disulfide-linked. Residues Trp129, Trp130, and Gln142 each contribute to the a mannooligosaccharide derivative site. Residues Asn169 and Asn190 are each glycosylated (N-linked (GlcNAc...) asparagine). Intrachain disulfides connect Cys194–Cys225 and Cys209–Cys237. A mannooligosaccharide derivative contacts are provided by Asp195, Arg201, Glu221, and Tyr227. Over residues 262-276 the composition is skewed to basic and acidic residues; that stretch reads DATRNKEEQAVDESP. The tract at residues 262 to 282 is disordered; sequence DATRNKEEQAVDESPKMIADS.

This sequence belongs to the OS-9 family. In terms of assembly, interacts with HRD3A.

Its subcellular location is the endoplasmic reticulum. In terms of biological role, lectin which functions in endoplasmic reticulum (ER) quality control and ER-associated degradation (ERAD). May bind terminally misfolded non-glycosylated proteins as well as improperly folded glycoproteins, retain them in the ER, and possibly transfer them to the ubiquitination machinery and promote their degradation. Targets the misfolded LRR receptor kinase BRI1 and the misfolded receptor-like kinase EFR. The protein is Protein OS-9 homolog of Arabidopsis thaliana (Mouse-ear cress).